Reading from the N-terminus, the 322-residue chain is Ornithine carbamoyltransferase (322 aa).

Residues 67–70, Gln94, Arg118, and 145–148 contribute to the carbamoyl phosphate site; these read STRT and HPCQ. Residues Asn176, Asp240, and 244–245 each bind L-ornithine; that span reads SM. Carbamoyl phosphate contacts are provided by residues 280–281 and Arg308; that span reads CL.

This sequence belongs to the aspartate/ornithine carbamoyltransferase superfamily. OTCase family.

The protein resides in the cytoplasm. The enzyme catalyses carbamoyl phosphate + L-ornithine = L-citrulline + phosphate + H(+). Its pathway is amino-acid biosynthesis; L-arginine biosynthesis; L-arginine from L-ornithine and carbamoyl phosphate: step 1/3. Reversibly catalyzes the transfer of the carbamoyl group from carbamoyl phosphate (CP) to the N(epsilon) atom of ornithine (ORN) to produce L-citrulline. In Oceanobacillus iheyensis (strain DSM 14371 / CIP 107618 / JCM 11309 / KCTC 3954 / HTE831), this protein is Ornithine carbamoyltransferase.